A 225-amino-acid polypeptide reads, in one-letter code: Uracil-DNA glycosylase (225 aa).

The active-site Proton acceptor is the Asp67.

The protein belongs to the uracil-DNA glycosylase (UDG) superfamily. UNG family.

Its subcellular location is the cytoplasm. The enzyme catalyses Hydrolyzes single-stranded DNA or mismatched double-stranded DNA and polynucleotides, releasing free uracil.. Functionally, excises uracil residues from the DNA which can arise as a result of misincorporation of dUMP residues by DNA polymerase or due to deamination of cytosine. This is Uracil-DNA glycosylase from Coxiella burnetii (strain Dugway 5J108-111).